The chain runs to 204 residues: ATP-dependent Clp protease proteolytic subunit (204 aa).

The active-site Nucleophile is the S101. The active site involves H126.

This sequence belongs to the peptidase S14 family. As to quaternary structure, component of the chloroplastic Clp protease core complex.

Its subcellular location is the plastid. It localises to the chloroplast stroma. It catalyses the reaction Hydrolysis of proteins to small peptides in the presence of ATP and magnesium. alpha-casein is the usual test substrate. In the absence of ATP, only oligopeptides shorter than five residues are hydrolyzed (such as succinyl-Leu-Tyr-|-NHMec, and Leu-Tyr-Leu-|-Tyr-Trp, in which cleavage of the -Tyr-|-Leu- and -Tyr-|-Trp bonds also occurs).. Cleaves peptides in various proteins in a process that requires ATP hydrolysis. Has a chymotrypsin-like activity. Plays a major role in the degradation of misfolded proteins. This Phalaenopsis aphrodite subsp. formosana (Moth orchid) protein is ATP-dependent Clp protease proteolytic subunit.